Here is a 532-residue protein sequence, read N- to C-terminus: All-trans-retinyl ester 13-cis isomerohydrolase (532 aa).

Cys-112 carries the S-palmitoyl cysteine; in membrane form lipid modification. Fe cation is bound by residues His-180, His-241, and His-313. A lipid anchor (S-palmitoyl cysteine; in membrane form) is attached at Cys-329. His-527 contacts Fe cation.

The protein belongs to the carotenoid oxygenase family. Requires Fe(2+) as cofactor. Palmitoylated. Predominantly expressed in brain. Expressed at a low level in the eye.

It localises to the cytoplasm. The protein resides in the cell membrane. It catalyses the reaction an all-trans-retinyl ester + H2O = 13-cis-retinol + a fatty acid + H(+). It carries out the reaction lutein = (3R,3'S)-zeaxanthin. Specifically generates 13-cis retinol, a stereoisomeric form of retinoic acid. Capable of catalyzing the isomerization of lutein to meso-zeaxanthin an eye-specific carotenoid. The polypeptide is All-trans-retinyl ester 13-cis isomerohydrolase (rpe65b) (Danio rerio (Zebrafish)).